A 576-amino-acid polypeptide reads, in one-letter code: Septation ring formation regulator EzrA (576 aa).

Residues methionine 1 to isoleucine 7 are Extracellular-facing. The helical transmembrane segment at leucine 8–methionine 26 threads the bilayer. Topologically, residues arginine 27–leucine 576 are cytoplasmic. 2 coiled-coil regions span residues arginine 105–leucine 134 and glutamate 277–isoleucine 301.

Belongs to the EzrA family.

The protein resides in the cell membrane. Its function is as follows. Negative regulator of FtsZ ring formation; modulates the frequency and position of FtsZ ring formation. Inhibits FtsZ ring formation at polar sites. Interacts either with FtsZ or with one of its binding partners to promote depolymerization. The sequence is that of Septation ring formation regulator EzrA from Lactococcus lactis subsp. lactis (strain IL1403) (Streptococcus lactis).